The sequence spans 638 residues: Protein NSP-INTERACTING KINASE 1 (638 aa).

Residues 1-31 (MESTIVMMMMITRSFFCFLGFLCLLCSSVHG) form the signal peptide. Over 32–248 (LLSPKGVNFE…AGGSRNHKMA (217 aa)) the chain is Extracellular. 2 N-linked (GlcNAc...) asparagine glycosylation sites follow: Asn-92 and Asn-103. 4 LRR repeats span residues 104–128 (LTNL…IGRL), 130–152 (RLET…VGYL), 153–175 (QSLQ…SLSN), and 177–200 (TQLA…AAKT). N-linked (GlcNAc...) asparagine glycans are attached at residues Asn-162, Asn-175, Asn-188, Asn-219, and Asn-231. A helical transmembrane segment spans residues 249–269 (IAVGSSVGTVSLIFIAVGLFL). Residues 270-638 (WWRQRHNQNT…VQAMELSGPR (369 aa)) lie on the Cytoplasmic side of the membrane. Phosphothreonine is present on Thr-309. The 282-residue stretch at 312–593 (FSSKNLLGKG…EGDGLAEKWE (282 aa)) folds into the Protein kinase domain. 318–326 (LGKGGYGNV) serves as a coordination point for ATP. Residue Thr-335 is modified to Phosphothreonine. Residue Lys-340 participates in ATP binding. 2 positions are modified to phosphoserine: Ser-393 and Ser-396. An interaction with geminivirus NSP protein region spans residues 422 to 502 (YLHEQCDPKI…DVFGFGILLL (81 aa)). The active-site Proton acceptor is Asp-435. Thr-468, Thr-469, and Thr-474 each carry phosphothreonine. Tyr-482 is modified (phosphotyrosine). Ser-484 is modified (phosphoserine). Phosphothreonine is present on Thr-485. Phosphoserine is present on Ser-489. A Phosphothreonine modification is found at Thr-566.

This sequence belongs to the protein kinase superfamily. Ser/Thr protein kinase family. Oligomer. Interacts with geminivirus nuclear shuttle protein (NSP). Interacts with RPL10A and RPL18B. Autophosphorylated. In terms of tissue distribution, expressed in seedlings, leaves, roots, stems and flowers.

It is found in the cell membrane. It catalyses the reaction L-seryl-[protein] + ATP = O-phospho-L-seryl-[protein] + ADP + H(+). It carries out the reaction L-threonyl-[protein] + ATP = O-phospho-L-threonyl-[protein] + ADP + H(+). With respect to regulation, inhibited by the viral nuclear shuttle protein (NSP) that binds to the region required for oligomerization. Its function is as follows. Involved in defense response to geminivirus and begomovirus infection via regulation of the nuclear trafficking of RPL10A. Phosphorylates RPL10A in vitro. Activation of NIK1 down-regulates cytosolic translation. The polypeptide is Protein NSP-INTERACTING KINASE 1 (Arabidopsis thaliana (Mouse-ear cress)).